A 393-amino-acid chain; its full sequence is Putative N(4)-(beta-N-acetylglucosaminyl)-L-asparaginase GM21137 (393 aa).

A signal peptide spans 1–23 (MRTHLRASLWVLCLASTAFSILA). 2 disulfides stabilise this stretch: Cys-97/Cys-102 and Cys-196/Cys-212. The active-site Nucleophile is the Thr-243. Residues 271–274 (RVGD) and 294–297 (TGDG) contribute to the substrate site. Cys-354 and Cys-381 form a disulfide bridge.

The protein belongs to the Ntn-hydrolase family. In terms of assembly, heterotetramer of two alpha and two beta chains arranged as a dimer of alpha/beta heterodimers. Cleaved into an alpha and beta chain by autocatalysis; this activates the enzyme. The N-terminal residue of the beta subunit is responsible for the nucleophile hydrolase activity.

It catalyses the reaction N(4)-(beta-N-acetyl-D-glucosaminyl)-L-asparagine + H2O = N-acetyl-beta-D-glucosaminylamine + L-aspartate + H(+). Its function is as follows. Cleaves the GlcNAc-Asn bond which joins oligosaccharides to the peptide of asparagine-linked glycoproteins. The protein is Putative N(4)-(beta-N-acetylglucosaminyl)-L-asparaginase GM21137 of Drosophila sechellia (Fruit fly).